The chain runs to 255 residues: MKNNKIKIKSSNLNVHYGEKQALFDVDLDIYDKEVTALIGPSGCGKSTFIRCINRMNDVIDICKVEGSITIDDEEIIDKNLDVVGLREKIGMVFQKPNPFPKSIYDNISYGPTIHGLTENKTDMDEIVENSLKKAALWNEVKDRLNEAGTGLSGGQQQRLCIARAISVNPQVILMDEPCSALDPIATAKIEELIDELKKSYTIVIVTHSMSQAVRVSQRTGFFHLGKIIEVDTTEKIFKNPGNKMTQDYITGRFG.

In terms of domain architecture, ABC transporter spans 8 to 250; sequence IKSSNLNVHY…PGNKMTQDYI (243 aa). Residue 40–47 coordinates ATP; sequence GPSGCGKS.

Belongs to the ABC transporter superfamily. Phosphate importer (TC 3.A.1.7) family. The complex is composed of two ATP-binding proteins (PstB), two transmembrane proteins (PstC and PstA) and a solute-binding protein (PstS).

The protein resides in the cell inner membrane. The enzyme catalyses phosphate(out) + ATP + H2O = ADP + 2 phosphate(in) + H(+). In terms of biological role, part of the ABC transporter complex PstSACB involved in phosphate import. Responsible for energy coupling to the transport system. The polypeptide is Phosphate import ATP-binding protein PstB (Pelagibacter ubique (strain HTCC1062)).